The primary structure comprises 260 residues: G patch domain-containing protein 11 (260 aa).

The stretch at 25–61 (MLRQIREARRKEEKRQEANLKNRQKSIKEEEQERRDM) forms a coiled coil. The disordered stretch occupies residues 33 to 60 (RRKEEKRQEANLKNRQKSIKEEEQERRD). A G-patch domain is found at 69 to 115 (CENKGFALLQKMGYKSGQALGKSGDGIVEPIPLNVKTGKSGIGHETL). Lys123 is subject to N6-acetyllysine. The segment at 187 to 212 (WLRPEEETEEETEEEKEQDEDEYKSE) is disordered. Positions 192–210 (EETEEETEEEKEQDEDEYK) are enriched in acidic residues.

Belongs to the GPATCH11 family.

It is found in the chromosome. Its subcellular location is the centromere. It localises to the kinetochore. This is G patch domain-containing protein 11 (GPATCH11) from Bos taurus (Bovine).